The following is a 156-amino-acid chain: Small ribosomal subunit protein uS7 (156 aa).

This sequence belongs to the universal ribosomal protein uS7 family. In terms of assembly, part of the 30S ribosomal subunit. Contacts proteins S9 and S11.

In terms of biological role, one of the primary rRNA binding proteins, it binds directly to 16S rRNA where it nucleates assembly of the head domain of the 30S subunit. Is located at the subunit interface close to the decoding center, probably blocks exit of the E-site tRNA. The protein is Small ribosomal subunit protein uS7 of Geobacillus thermodenitrificans (strain NG80-2).